Consider the following 82-residue polypeptide: Beta-insect depressant toxin LqqIT2 (82 aa).

Residues 1 to 21 (MKLLLLLIVSASMLIESLVNA) form the signal peptide. An LCN-type CS-alpha/beta domain is found at 22–82 (DGYIRKRDGC…TWKSETNTCG (61 aa)). 4 cysteine pairs are disulfide-bonded: Cys-31–Cys-81, Cys-35–Cys-56, Cys-42–Cys-63, and Cys-46–Cys-65.

It belongs to the long (4 C-C) scorpion toxin superfamily. Sodium channel inhibitor family. Beta subfamily. In terms of tissue distribution, expressed by the venom gland.

The protein localises to the secreted. In terms of biological role, depressant insect beta-toxins cause a transient contraction paralysis followed by a slow flaccid paralysis. They bind voltage-independently at site-4 of sodium channels and shift the voltage of activation toward more negative potentials thereby affecting sodium channel activation and promoting spontaneous and repetitive firing. Aside from typical beta-toxin effects, this toxin also affects the inactivation process and ion selectivity of the insect voltage-gated sodium channel. This toxin is active only on insects. Is active on the insect voltage-gated sodium channel para. In vivo, when injected intraperitoneally, it exhibits analgesic activity, increasing hot plate and tail flick withdrawal latencies in a dose-dependent fashion. This phenomenon might be partly due to an inhibitory mechanism activated by noxious stimuli. This Leiurus quinquestriatus quinquestriatus (Egyptian scorpion) protein is Beta-insect depressant toxin LqqIT2.